Here is a 1220-residue protein sequence, read N- to C-terminus: Cullin-associated NEDD8-dissociated protein 1 (1220 aa).

HEAT repeat units follow at residues 1-35 (MEEG…DANH), 42-79 (ESFP…KIPQ), 121-157 (FYTS…SLEI), 259-295 (ADYT…YQQV), 365-410 (LSRL…HVPR), 615-650 (IFLR…SVTD), 680-700 (TTAY…YLAE), 701-737 (SLLE…SILL), 738-775 (KSKN…VISK), 810-847 (FQSK…DYGK), 850-887 (LPAN…QSEK), and 1020-1057 (EVSQ…KSSV).

Belongs to the CAND family.

Its subcellular location is the nucleus. In terms of biological role, key assembly factor of SCF (SKP1-CUL1-F-box protein) E3 ubiquitin ligase complexes that promotes the exchange of the substrate-recognition F-box subunit in SCF complexes, thereby playing a key role in the cellular repertoire of SCF complexes. Acts as a F-box protein exchange factor. The chain is Cullin-associated NEDD8-dissociated protein 1 (knd1) from Schizosaccharomyces pombe (strain 972 / ATCC 24843) (Fission yeast).